Here is a 280-residue protein sequence, read N- to C-terminus: RAD52 motif-containing protein 1 (280 aa).

Residues lysine 18 to lysine 101 form the RRM domain.

As to quaternary structure, homodimer.

The protein localises to the nucleus. It is found in the cytoplasm. The protein resides in the nucleolus. May confer resistance to the antitumor agent cisplatin. Binds to DNA and RNA. The chain is RAD52 motif-containing protein 1 (rdm1) from Danio rerio (Zebrafish).